The primary structure comprises 544 residues: Prolyl 4-hydroxylase subunit alpha-3 (544 aa).

The N-terminal stretch at 1–19 (MGPGARLAALLAVLALGTG) is a signal peptide. A coiled-coil region spans residues 107 to 131 (LEASENIRALKDGYEKVEQDLPAFE). The TPR repeat unit spans residues 227–260 (EDALDHLAFAYFRAGNVSCALSLSREFLLYSPDN). An N-linked (GlcNAc...) asparagine glycan is attached at N242. Residues 422–529 (YAEYLQVVNY…KWVANKWIHE (108 aa)) enclose the Fe2OG dioxygenase domain. Fe cation contacts are provided by H440 and D442. N-linked (GlcNAc...) asparagine glycosylation is present at N482. H510 contacts Fe cation. Position 520 (K520) interacts with 2-oxoglutarate.

Belongs to the P4HA family. In terms of assembly, heterotetramer of two alpha-3 chains and two beta chains (the beta chain is the multi-functional PDI). Fe(2+) is required as a cofactor. The cofactor is L-ascorbate. N-glycosylation plays no role in the catalytic activity. As to expression, highly expressed in placenta, liver and fetal skin. Weakly expressed in fetal epiphyseal cartilage, fetal liver, fibroblast, lung and skeletal muscle. Expressed also in fibrous cap of carotid atherosclerotic lesions.

The protein localises to the endoplasmic reticulum lumen. It carries out the reaction L-prolyl-[collagen] + 2-oxoglutarate + O2 = trans-4-hydroxy-L-prolyl-[collagen] + succinate + CO2. Catalyzes the post-translational formation of 4-hydroxyproline in -Xaa-Pro-Gly- sequences in collagens and other proteins. This chain is Prolyl 4-hydroxylase subunit alpha-3 (P4HA3), found in Homo sapiens (Human).